The chain runs to 501 residues: Lysine--tRNA ligase (501 aa).

2 residues coordinate Mg(2+): Glu-411 and Glu-418.

The protein belongs to the class-II aminoacyl-tRNA synthetase family. In terms of assembly, homodimer. Mg(2+) is required as a cofactor.

It localises to the cytoplasm. The catalysed reaction is tRNA(Lys) + L-lysine + ATP = L-lysyl-tRNA(Lys) + AMP + diphosphate. The sequence is that of Lysine--tRNA ligase from Aliivibrio salmonicida (strain LFI1238) (Vibrio salmonicida (strain LFI1238)).